A 256-amino-acid chain; its full sequence is 4-hydroxy-tetrahydrodipicolinate reductase (256 aa).

NAD(+) is bound at residue G8 to V13. K36 lines the NADP(+) pocket. NAD(+)-binding positions include G89–T91 and A113–M116. The Proton donor/acceptor role is filled by H145. A (S)-2,3,4,5-tetrahydrodipicolinate-binding site is contributed by H146. Catalysis depends on K149, which acts as the Proton donor. G155 to T156 serves as a coordination point for (S)-2,3,4,5-tetrahydrodipicolinate.

Belongs to the DapB family.

It is found in the cytoplasm. It catalyses the reaction (S)-2,3,4,5-tetrahydrodipicolinate + NAD(+) + H2O = (2S,4S)-4-hydroxy-2,3,4,5-tetrahydrodipicolinate + NADH + H(+). It carries out the reaction (S)-2,3,4,5-tetrahydrodipicolinate + NADP(+) + H2O = (2S,4S)-4-hydroxy-2,3,4,5-tetrahydrodipicolinate + NADPH + H(+). The protein operates within amino-acid biosynthesis; L-lysine biosynthesis via DAP pathway; (S)-tetrahydrodipicolinate from L-aspartate: step 4/4. Its function is as follows. Catalyzes the conversion of 4-hydroxy-tetrahydrodipicolinate (HTPA) to tetrahydrodipicolinate. This is 4-hydroxy-tetrahydrodipicolinate reductase from Wolinella succinogenes (strain ATCC 29543 / DSM 1740 / CCUG 13145 / JCM 31913 / LMG 7466 / NCTC 11488 / FDC 602W) (Vibrio succinogenes).